Here is a 442-residue protein sequence, read N- to C-terminus: 26S proteasome non-ATPase regulatory subunit 12 homolog B (442 aa).

A coiled-coil region spans residues M1 to A129. Positions E232 to D403 constitute a PCI domain.

The protein belongs to the proteasome subunit p55 family. As to quaternary structure, component of the 19S regulatory particle (RP/PA700) lid subcomplex of the 26S proteasome. The 26S proteasome is composed of a core protease (CP), known as the 20S proteasome, capped at one or both ends by the 19S regulatory particle (RP/PA700). The RP/PA700 complex is composed of at least 17 different subunits in two subcomplexes, the base and the lid, which form the portions proximal and distal to the 20S proteolytic core, respectively. In terms of tissue distribution, ubiquitous with highest expression in flowers.

Its subcellular location is the cytoplasm. It localises to the nucleus. Acts as a regulatory subunit of the 26 proteasome which is involved in the ATP-dependent degradation of ubiquitinated proteins. Acts redundantly with RPN5A. The chain is 26S proteasome non-ATPase regulatory subunit 12 homolog B (RPN5B) from Arabidopsis thaliana (Mouse-ear cress).